The primary structure comprises 284 residues: Shikimate dehydrogenase (NADP(+)) (284 aa).

Shikimate contacts are provided by residues 20–22 and S67; that span reads SIS. K71 acts as the Proton acceptor in catalysis. D83 provides a ligand contact to NADP(+). Shikimate is bound by residues N92 and D107. Residues 129–133 and I227 contribute to the NADP(+) site; that span reads GAGGA. Y229 serves as a coordination point for shikimate. G250 contributes to the NADP(+) binding site.

Belongs to the shikimate dehydrogenase family. As to quaternary structure, homodimer.

The enzyme catalyses shikimate + NADP(+) = 3-dehydroshikimate + NADPH + H(+). It functions in the pathway metabolic intermediate biosynthesis; chorismate biosynthesis; chorismate from D-erythrose 4-phosphate and phosphoenolpyruvate: step 4/7. In terms of biological role, involved in the biosynthesis of the chorismate, which leads to the biosynthesis of aromatic amino acids. Catalyzes the reversible NADPH linked reduction of 3-dehydroshikimate (DHSA) to yield shikimate (SA). The sequence is that of Shikimate dehydrogenase (NADP(+)) from Streptococcus pneumoniae (strain Taiwan19F-14).